The primary structure comprises 621 residues: Type 2 DNA topoisomerase 6 subunit B (621 aa).

Residues asparagine 48, aspartate 80, 101–102, 111–118, and lysine 435 each bind ATP; these read SR and GQQGIGIS.

It belongs to the TOP6B family. Homodimer. Heterotetramer of two Top6A and two Top6B chains.

It catalyses the reaction ATP-dependent breakage, passage and rejoining of double-stranded DNA.. Relaxes both positive and negative superturns and exhibits a strong decatenase activity. The protein is Type 2 DNA topoisomerase 6 subunit B of Methanosarcina mazei (strain ATCC BAA-159 / DSM 3647 / Goe1 / Go1 / JCM 11833 / OCM 88) (Methanosarcina frisia).